The chain runs to 597 residues: Apurinic-apyrimidinic endonuclease 1 (597 aa).

Residues 232–246 (YNNDTKYLSNPKGVT) show a composition bias toward polar residues. Residues 232-296 (YNNDTKYLSN…IPPIPKNTED (65 aa)) form a disordered region. The span at 265–274 (NNNNNNNNNK) shows a compositional bias: low complexity. Residues H380, H420, E456, D490, H493, H527, D540, H542, and E572 each contribute to the Zn(2+) site. H493 contacts Mn(2+). Mn(2+) is bound by residues D540 and H542.

The protein belongs to the AP endonuclease 2 family. Zn(2+) serves as cofactor. It depends on Mn(2+) as a cofactor. May be proteolytically cleaved into a 59 kDa form.

It is found in the mitochondrion. Its activity is regulated as follows. Apurinic/apyrimidinic (AP) endonuclease activity is enhanced with increasing concentrations of Mn(2+), while Zn(2+) initially enhances activity but subsequently inhibits activity in a concentration-dependent manner. Co(2+) inhibits apurinic/apyrimidinic (AP) endonuclease activity at concentrations greater than 2.5 mM. Functionally, plays a role in mitochondrial DNA base excision repair (BER) pathway induced by oxidative stress. Has apurinic/apyrimidinic (AP) endonuclease activity towards double-stranded DNA (dsDNA) with a preference for C as opposite base. Has 3'-phosphatase activity; removes 3'-phosphate from blunt-end, recessed, and gapped DNA templates and thus, removes 3'-blocks for DNA polymerase activity during BER. Lacks 3'-5' exonuclease activity and does not cleave damaged bases by nucleotide incision repair (NIR). This is Apurinic-apyrimidinic endonuclease 1 from Plasmodium falciparum (isolate 3D7).